A 366-amino-acid chain; its full sequence is Holliday junction branch migration complex subunit RuvB (366 aa).

The segment at Met-1–Ile-49 is disordered. Positions Pro-13–Tyr-210 are large ATPase domain (RuvB-L). Residues Ile-49, Arg-50, Gly-91, Lys-94, Thr-95, Thr-96, Glu-157–Tyr-159, Arg-200, Tyr-210, and Arg-247 each bind ATP. Thr-95 is a Mg(2+) binding site. The small ATPAse domain (RuvB-S) stretch occupies residues Glu-211 to Gln-281. The tract at residues Pro-284–Leu-366 is head domain (RuvB-H). Positions 339 and 344 each coordinate DNA.

It belongs to the RuvB family. In terms of assembly, homohexamer. Forms an RuvA(8)-RuvB(12)-Holliday junction (HJ) complex. HJ DNA is sandwiched between 2 RuvA tetramers; dsDNA enters through RuvA and exits via RuvB. An RuvB hexamer assembles on each DNA strand where it exits the tetramer. Each RuvB hexamer is contacted by two RuvA subunits (via domain III) on 2 adjacent RuvB subunits; this complex drives branch migration. In the full resolvosome a probable DNA-RuvA(4)-RuvB(12)-RuvC(2) complex forms which resolves the HJ.

It is found in the cytoplasm. It carries out the reaction ATP + H2O = ADP + phosphate + H(+). In terms of biological role, the RuvA-RuvB-RuvC complex processes Holliday junction (HJ) DNA during genetic recombination and DNA repair, while the RuvA-RuvB complex plays an important role in the rescue of blocked DNA replication forks via replication fork reversal (RFR). RuvA specifically binds to HJ cruciform DNA, conferring on it an open structure. The RuvB hexamer acts as an ATP-dependent pump, pulling dsDNA into and through the RuvAB complex. RuvB forms 2 homohexamers on either side of HJ DNA bound by 1 or 2 RuvA tetramers; 4 subunits per hexamer contact DNA at a time. Coordinated motions by a converter formed by DNA-disengaged RuvB subunits stimulates ATP hydrolysis and nucleotide exchange. Immobilization of the converter enables RuvB to convert the ATP-contained energy into a lever motion, pulling 2 nucleotides of DNA out of the RuvA tetramer per ATP hydrolyzed, thus driving DNA branch migration. The RuvB motors rotate together with the DNA substrate, which together with the progressing nucleotide cycle form the mechanistic basis for DNA recombination by continuous HJ branch migration. Branch migration allows RuvC to scan DNA until it finds its consensus sequence, where it cleaves and resolves cruciform DNA. This chain is Holliday junction branch migration complex subunit RuvB, found in Trichormus variabilis (strain ATCC 29413 / PCC 7937) (Anabaena variabilis).